The primary structure comprises 55 residues: Large ribosomal subunit protein bL32 (55 aa).

A disordered region spans residues 1–28; that stretch reads MAVQQNKPTRSKRGMRRSHDALTTATLS.

It belongs to the bacterial ribosomal protein bL32 family.

This is Large ribosomal subunit protein bL32 from Serratia proteamaculans (strain 568).